The primary structure comprises 390 residues: Homeobox protein Hox-B2a (390 aa).

4 disordered regions span residues 40–73, 81–100, 108–155, and 211–338; these read STAIPPPFEHTIPSLSPCTGNQARPRSQKRTASN, TAPPTQHQQGPAPLSGGAPL, KEKK…LDNV, and MKHK…SLPD. The span at 52–73 shows a compositional bias: polar residues; that stretch reads PSLSPCTGNQARPRSQKRTASN. An Antp-type hexapeptide motif is present at residues 103 to 108; the sequence is EFPWMK. The span at 118–135 shows a compositional bias: low complexity; it reads KPGATAAAAAASPSQASS. The homeobox DNA-binding region spans 158–217; that stretch reads SRRLRTAYTNTQLLELEKEFHFNKYLCRPRRVEIAALLDLTERQVKVWFQNRRMKHKRQT. A compositionally biased stretch (low complexity) spans 244 to 262; it reads SSQSLEVSGSGSAAPSESE. Positions 263 to 290 are enriched in polar residues; the sequence is TCPTTAAYTNSSDKSQPTPEEGQASQPE.

This sequence belongs to the Antp homeobox family. Proboscipedia subfamily.

It is found in the nucleus. Sequence-specific transcription factor which is part of a developmental regulatory system that provides cells with specific positional identities on the anterior-posterior axis. Plays an important role in the patterning of hindbrain and pharyngeal arches. This is Homeobox protein Hox-B2a (hoxb2a) from Danio rerio (Zebrafish).